The following is a 435-amino-acid chain: Large ribosomal subunit protein mL65 (435 aa).

It belongs to the mitochondrion-specific ribosomal protein mL65 family. Component of the mitochondrial ribosome small subunit (28S) which comprises a 12S rRNA and about 30 distinct proteins.

It is found in the mitochondrion. This is Large ribosomal subunit protein mL65 (MRPS30) from Bos taurus (Bovine).